A 227-amino-acid chain; its full sequence is MARGIFITATGTDIGKTYVTALIIKRLRETNINCGYYKAALSGAERRDGKLIAGDANYVYNIANIKGDPNDAVSYIFQQAVSPHLAAKLNNVEISMERIKKDFYSIKNKYDYITVEGSGGIVCPISTGKKKIMLDNIIKIFKLPAIVVADAGLGTINSTILTLQYMKEKNISVKMILLNNYNHEDIIHIENKGYLSDNLLIPVYTCNKNANNLEIPVEKLIEIYEEI.

ATP is bound at residue D13–Y18. T17 is a binding site for Mg(2+). K38 is a catalytic residue. S42 provides a ligand contact to substrate. ATP is bound by residues D55, E116–G119, and N179–N180. Mg(2+)-binding residues include D55 and E116.

This sequence belongs to the dethiobiotin synthetase family. Homodimer. Mg(2+) is required as a cofactor.

It localises to the cytoplasm. The catalysed reaction is (7R,8S)-7,8-diammoniononanoate + CO2 + ATP = (4R,5S)-dethiobiotin + ADP + phosphate + 3 H(+). Its pathway is cofactor biosynthesis; biotin biosynthesis; biotin from 7,8-diaminononanoate: step 1/2. In terms of biological role, catalyzes a mechanistically unusual reaction, the ATP-dependent insertion of CO2 between the N7 and N8 nitrogen atoms of 7,8-diaminopelargonic acid (DAPA, also called 7,8-diammoniononanoate) to form a ureido ring. This is ATP-dependent dethiobiotin synthetase BioD from Clostridium botulinum (strain Okra / Type B1).